Reading from the N-terminus, the 343-residue chain is Vacuolar membrane protein Kpol_1003p17 (343 aa).

The interval 45–65 (TTDTSGTSTSSRDVSSGQSTL) is disordered. The helical transmembrane segment at 101 to 121 (FIAVGSIIGGIFGGVLIWWMI) threads the bilayer. The segment at 235 to 343 (EVLQQQRQRR…YLDDMLENDN (109 aa)) is disordered. Positions 254 to 264 (ELPSTPPSNFK) are enriched in polar residues. Residues 269 to 280 (KPERSASPERKS) are compositionally biased toward basic and acidic residues. Residues 281–290 (RSPIRQHRKN) show a composition bias toward basic residues.

Belongs to the PRM5 family.

The protein localises to the vacuole membrane. This Vanderwaltozyma polyspora (strain ATCC 22028 / DSM 70294 / BCRC 21397 / CBS 2163 / NBRC 10782 / NRRL Y-8283 / UCD 57-17) (Kluyveromyces polysporus) protein is Vacuolar membrane protein Kpol_1003p17.